A 365-amino-acid polypeptide reads, in one-letter code: DNA replication and repair protein RecF (365 aa).

30-37 (GRNAQGKT) provides a ligand contact to ATP.

The protein belongs to the RecF family.

The protein localises to the cytoplasm. Functionally, the RecF protein is involved in DNA metabolism; it is required for DNA replication and normal SOS inducibility. RecF binds preferentially to single-stranded, linear DNA. It also seems to bind ATP. The chain is DNA replication and repair protein RecF from Streptococcus pneumoniae (strain CGSP14).